Reading from the N-terminus, the 666-residue chain is Calpain-10 (666 aa).

A Calpain catalytic domain is found at 13–321 (LFRDAAFPAS…FDEVTIGYPV (309 aa)). Residues Cys-73, His-238, and Asn-263 contribute to the active site. Domain III regions lie at residues 322–488 (TEAG…ISLS) and 507–648 (EWET…IHSQ).

The protein belongs to the peptidase C2 family.

Its function is as follows. Calcium-regulated non-lysosomal thiol-protease which catalyzes limited proteolysis of substrates involved in cytoskeletal remodeling and signal transduction. May play a role in insulin-stimulated glucose uptake. In Mus musculus (Mouse), this protein is Calpain-10 (Capn10).